The chain runs to 150 residues: Cytochrome c oxidase subunit 5A, mitochondrial (150 aa).

The N-terminal 41 residues, 1-41 (MLGAALRRCAVAATAWAGPRGLLHSAPTPGPAAAIHSVRCY), are a transit peptide targeting the mitochondrion. The short motif at 2 to 17 (LGAALRRCAVAATAWA) is the SIFI-degron element. Lysine 87 and lysine 113 each carry N6-acetyllysine. Residue threonine 141 is modified to Phosphothreonine.

This sequence belongs to the cytochrome c oxidase subunit 5A family. In terms of assembly, component of the cytochrome c oxidase (complex IV, CIV), a multisubunit enzyme composed of 14 subunits. The complex is composed of a catalytic core of 3 subunits MT-CO1, MT-CO2 and MT-CO3, encoded in the mitochondrial DNA, and 11 supernumerary subunits COX4I, COX5A, COX5B, COX6A, COX6B, COX6C, COX7A, COX7B, COX7C, COX8 and NDUFA4, which are encoded in the nuclear genome. The complex exists as a monomer or a dimer and forms supercomplexes (SCs) in the inner mitochondrial membrane with NADH-ubiquinone oxidoreductase (complex I, CI) and ubiquinol-cytochrome c oxidoreductase (cytochrome b-c1 complex, complex III, CIII), resulting in different assemblies (supercomplex SCI(1)III(2)IV(1) and megacomplex MCI(2)III(2)IV(2)). Interacts with AFG1L. Interacts with RAB5IF. In response to mitochondrial stress, the precursor protein is ubiquitinated by the SIFI complex in the cytoplasm before mitochondrial import, leading to its degradation. Within the SIFI complex, UBR4 initiates ubiquitin chain that are further elongated or branched by KCMF1.

Its subcellular location is the mitochondrion inner membrane. Its pathway is energy metabolism; oxidative phosphorylation. In terms of biological role, component of the cytochrome c oxidase, the last enzyme in the mitochondrial electron transport chain which drives oxidative phosphorylation. The respiratory chain contains 3 multisubunit complexes succinate dehydrogenase (complex II, CII), ubiquinol-cytochrome c oxidoreductase (cytochrome b-c1 complex, complex III, CIII) and cytochrome c oxidase (complex IV, CIV), that cooperate to transfer electrons derived from NADH and succinate to molecular oxygen, creating an electrochemical gradient over the inner membrane that drives transmembrane transport and the ATP synthase. Cytochrome c oxidase is the component of the respiratory chain that catalyzes the reduction of oxygen to water. Electrons originating from reduced cytochrome c in the intermembrane space (IMS) are transferred via the dinuclear copper A center (CU(A)) of subunit 2 and heme A of subunit 1 to the active site in subunit 1, a binuclear center (BNC) formed by heme A3 and copper B (CU(B)). The BNC reduces molecular oxygen to 2 water molecules using 4 electrons from cytochrome c in the IMS and 4 protons from the mitochondrial matrix. The protein is Cytochrome c oxidase subunit 5A, mitochondrial (COX5A) of Saimiri sciureus (Common squirrel monkey).